The chain runs to 154 residues: MAARLCCQLDPARDVLCLRPVGAESCGRPLSWSLGALPPSSPPAVPADDGSHLSLRGLPACAFSSAGPCALRFTSARRMETTVNAPWNLPTTLHKRTLGLSPRSTTWIEEYIKDCVFKDWEESGEELRLKVFVLGGCRHKLVCSPAPCNFFTSA.

Positions 68-117 (PCALRFTSARRMETTVNAPWNLPTTLHKRTLGLSPRSTTWIEEYIKDCVF) are mitochondrial targeting sequence.

This sequence belongs to the orthohepadnavirus protein X family. As to quaternary structure, may form homodimer. May interact with host CEBPA, CFLAR, CREB1, DDB1, E4F1, HBXIP, HSPD1/HSP60, NFKBIA, POLR2E and SMAD4. Interacts with host SMC5-SMC6 complex and induces its degradation. Interacts with host TRPC4AP; leading to prevent ubiquitination of TRPC4AP. Interacts with host PLSCR1; this interaction promotes ubiquitination and degradation of HBx and impairs HBx-mediated cell proliferation. Post-translationally, a fraction may be phosphorylated in insect cells and HepG2 cells, a human hepatoblastoma cell line. Phosphorylated in vitro by host protein kinase C or mitogen-activated protein kinase. N-acetylated in insect cells.

It localises to the host cytoplasm. The protein localises to the host nucleus. The protein resides in the host mitochondrion. Functionally, multifunctional protein that plays a role in silencing host antiviral defenses and promoting viral transcription. Does not seem to be essential for HBV infection. May be directly involved in development of cirrhosis and liver cancer (hepatocellular carcinoma). Most of cytosolic activities involve modulation of cytosolic calcium. The effect on apoptosis is controversial depending on the cell types in which the studies have been conducted. May induce apoptosis by localizing in mitochondria and causing loss of mitochondrial membrane potential. May also modulate apoptosis by binding host CFLAR, a key regulator of the death-inducing signaling complex (DISC). Promotes viral transcription by using the host E3 ubiquitin ligase DDB1 to target the SMC5-SMC6 complex to proteasomal degradation. This host complex would otherwise bind to viral episomal DNA, and prevents its transcription. Moderately stimulates transcription of many different viral and cellular transcription elements. Promoters and enhancers stimulated by HBx contain DNA binding sites for NF-kappa-B, AP-1, AP-2, c-EBP, ATF/CREB, or the calcium-activated factor NF-AT. This is Protein X from Homo sapiens (Human).